We begin with the raw amino-acid sequence, 355 residues long: Isopentenyl-diphosphate delta-isomerase (355 aa).

12–13 (RK) serves as a coordination point for substrate. Residues Ser-70, 71-73 (SMT), Ser-101, and Asn-130 contribute to the FMN site. 101–103 (SMR) contacts substrate. Gln-165 lines the substrate pocket. Glu-166 is a Mg(2+) binding site. Residues Lys-197 and 308–309 (AG) contribute to the FMN site.

This sequence belongs to the IPP isomerase type 2 family. Homooctamer. Dimer of tetramers. FMN serves as cofactor. It depends on NADPH as a cofactor. The cofactor is Mg(2+).

The protein localises to the cytoplasm. It catalyses the reaction isopentenyl diphosphate = dimethylallyl diphosphate. Involved in the biosynthesis of isoprenoids. Catalyzes the 1,3-allylic rearrangement of the homoallylic substrate isopentenyl (IPP) to its allylic isomer, dimethylallyl diphosphate (DMAPP). The sequence is that of Isopentenyl-diphosphate delta-isomerase from Chlorobium phaeovibrioides (strain DSM 265 / 1930) (Prosthecochloris vibrioformis (strain DSM 265)).